The chain runs to 23 residues: Hemocyanin subunit 1 (23 aa).

Residues 1–23 (DSPGGASDTQKQHXVNSXXXKXY) form a disordered region.

It belongs to the tyrosinase family. Hemocyanin subfamily. In terms of tissue distribution, hemolymph.

It localises to the secreted. The protein resides in the extracellular space. Hemocyanins are copper-containing oxygen carriers occurring freely dissolved in the hemolymph of many mollusks and arthropods. The polypeptide is Hemocyanin subunit 1 (Cancer pagurus (Rock crab)).